We begin with the raw amino-acid sequence, 419 residues long: Acyl-[acyl-carrier-protein] desaturase 6, chloroplastic (419 aa).

Residues 1-54 constitute a chloroplast transit peptide; sequence MAATATMAMPLANRLRCKPNTNSSSPSRTLFGRRVTMISSSRWGSAVSGSAIMS. The Fe cation site is built by Glu151, Glu189, His192, Glu242, Glu277, and His280.

This sequence belongs to the fatty acid desaturase type 2 family. As to quaternary structure, homodimer. Requires Fe(2+) as cofactor.

The protein localises to the plastid. It is found in the chloroplast. Its pathway is lipid metabolism; fatty acid metabolism. In terms of biological role, introduces a cis double bond in the acyl chain of an acyl-[acyl-carrier protein]. This is Acyl-[acyl-carrier-protein] desaturase 6, chloroplastic from Oryza sativa subsp. japonica (Rice).